The primary structure comprises 285 residues: Protoheme IX farnesyltransferase (285 aa).

Transmembrane regions (helical) follow at residues 8 to 28 (ITKP…FLFA), 36 to 56 (YVLF…ACVF), 80 to 100 (LLPV…GLSI), 107 to 127 (FISM…YTMF), 133 to 153 (FYST…GYTA), 163 to 183 (ILLF…ISIM), 209 to 229 (IFFY…LGYL), 232 to 252 (NFLL…YSNI), and 265 to 285 (FYFS…DVFF).

Belongs to the UbiA prenyltransferase family. Protoheme IX farnesyltransferase subfamily.

It is found in the cell membrane. The catalysed reaction is heme b + (2E,6E)-farnesyl diphosphate + H2O = Fe(II)-heme o + diphosphate. Its pathway is porphyrin-containing compound metabolism; heme O biosynthesis; heme O from protoheme: step 1/1. Converts heme B (protoheme IX) to heme O by substitution of the vinyl group on carbon 2 of heme B porphyrin ring with a hydroxyethyl farnesyl side group. This Buchnera aphidicola subsp. Acyrthosiphon pisum (strain Tuc7) protein is Protoheme IX farnesyltransferase.